The primary structure comprises 438 residues: CBL-interacting protein kinase 32 (438 aa).

The region spanning 13–268 (YELGRTIGEG…IPEILEDEWF (256 aa)) is the Protein kinase domain. ATP-binding positions include 19–27 (IGEGTFAKV) and lysine 42. The active-site Proton acceptor is the aspartate 136. An activation loop region spans residues 154-183 (DFGLSALSQQIKDDGLLHTTCGTPNYVAPE). Residues 305-329 (EEPEALNAFELISMSAGLNLGNLFD) enclose the NAF domain. Residues 335–364 (KRETRFTSKCPPKEIVRKIEEAAKPLGFDV) form a PPI region.

This sequence belongs to the protein kinase superfamily. CAMK Ser/Thr protein kinase family. SNF1 subfamily. The cofactor is Mn(2+).

The catalysed reaction is L-seryl-[protein] + ATP = O-phospho-L-seryl-[protein] + ADP + H(+). It carries out the reaction L-threonyl-[protein] + ATP = O-phospho-L-threonyl-[protein] + ADP + H(+). Its function is as follows. CIPK serine-threonine protein kinases interact with CBL proteins. Binding of a CBL protein to the regulatory NAF domain of CIPK protein lead to the activation of the kinase in a calcium-dependent manner. The protein is CBL-interacting protein kinase 32 (CIPK32) of Oryza sativa subsp. japonica (Rice).